Reading from the N-terminus, the 96-residue chain is Large ribosomal subunit protein bL21 (96 aa).

A compositionally biased stretch (basic residues) spans 73–84; the sequence is KRRKRYQSRNGH. Positions 73–96 are disordered; the sequence is KRRKRYQSRNGHRQQMTQIEVVSL. The span at 85 to 96 shows a compositional bias: polar residues; sequence RQQMTQIEVVSL.

The protein belongs to the bacterial ribosomal protein bL21 family. Part of the 50S ribosomal subunit. Contacts protein L20.

In terms of biological role, this protein binds to 23S rRNA in the presence of protein L20. The sequence is that of Large ribosomal subunit protein bL21 from Chlorobium phaeovibrioides (strain DSM 265 / 1930) (Prosthecochloris vibrioformis (strain DSM 265)).